The chain runs to 98 residues: UPF0235 protein Mmc1_3654 (98 aa).

This sequence belongs to the UPF0235 family.

The sequence is that of UPF0235 protein Mmc1_3654 from Magnetococcus marinus (strain ATCC BAA-1437 / JCM 17883 / MC-1).